Here is a 102-residue protein sequence, read N- to C-terminus: Small ribosomal subunit protein bS6 (102 aa).

Belongs to the bacterial ribosomal protein bS6 family.

In terms of biological role, binds together with bS18 to 16S ribosomal RNA. In Deinococcus geothermalis (strain DSM 11300 / CIP 105573 / AG-3a), this protein is Small ribosomal subunit protein bS6.